The chain runs to 328 residues: Beta-ketoacyl-[acyl-carrier-protein] synthase III (328 aa).

Active-site residues include cysteine 122 and histidine 255. An ACP-binding region spans residues 256 to 260; that stretch reads QANVR. Residue asparagine 285 is part of the active site.

The protein belongs to the thiolase-like superfamily. FabH family. Homodimer.

The protein resides in the cytoplasm. The enzyme catalyses malonyl-[ACP] + acetyl-CoA + H(+) = 3-oxobutanoyl-[ACP] + CO2 + CoA. It functions in the pathway lipid metabolism; fatty acid biosynthesis. Functionally, catalyzes the condensation reaction of fatty acid synthesis by the addition to an acyl acceptor of two carbons from malonyl-ACP. Catalyzes the first condensation reaction which initiates fatty acid synthesis and may therefore play a role in governing the total rate of fatty acid production. Possesses both acetoacetyl-ACP synthase and acetyl transacylase activities. Its substrate specificity determines the biosynthesis of branched-chain and/or straight-chain of fatty acids. The polypeptide is Beta-ketoacyl-[acyl-carrier-protein] synthase III (Bordetella pertussis (strain Tohama I / ATCC BAA-589 / NCTC 13251)).